We begin with the raw amino-acid sequence, 112 residues long: CRISPR-associated endoribonuclease Cas2 2 (112 aa).

Asp-15 provides a ligand contact to Mg(2+).

The protein belongs to the CRISPR-associated endoribonuclease Cas2 protein family. As to quaternary structure, homodimer, forms a heterotetramer with a Cas1 homodimer. The cofactor is Mg(2+).

CRISPR (clustered regularly interspaced short palindromic repeat), is an adaptive immune system that provides protection against mobile genetic elements (viruses, transposable elements and conjugative plasmids). CRISPR clusters contain sequences complementary to antecedent mobile elements and target invading nucleic acids. CRISPR clusters are transcribed and processed into CRISPR RNA (crRNA). Functions as a ssRNA-specific endoribonuclease. Involved in the integration of spacer DNA into the CRISPR cassette. This chain is CRISPR-associated endoribonuclease Cas2 2, found in Rhodospirillum rubrum (strain ATCC 11170 / ATH 1.1.1 / DSM 467 / LMG 4362 / NCIMB 8255 / S1).